The primary structure comprises 336 residues: tRNA-cytidine(32) 2-sulfurtransferase (336 aa).

Positions 11–23 (TAAAPAGTGEATP) are enriched in low complexity. The tract at residues 11–31 (TAAAPAGTGEATPVHARARSP) is disordered. The PP-loop motif signature appears at 75 to 80 (SGGKDS). [4Fe-4S] cluster-binding residues include C150, C153, and C241.

Belongs to the TtcA family. In terms of assembly, homodimer. Requires Mg(2+) as cofactor. It depends on [4Fe-4S] cluster as a cofactor.

The protein localises to the cytoplasm. It carries out the reaction cytidine(32) in tRNA + S-sulfanyl-L-cysteinyl-[cysteine desulfurase] + AH2 + ATP = 2-thiocytidine(32) in tRNA + L-cysteinyl-[cysteine desulfurase] + A + AMP + diphosphate + H(+). Its pathway is tRNA modification. Its function is as follows. Catalyzes the ATP-dependent 2-thiolation of cytidine in position 32 of tRNA, to form 2-thiocytidine (s(2)C32). The sulfur atoms are provided by the cysteine/cysteine desulfurase (IscS) system. In Paraburkholderia xenovorans (strain LB400), this protein is tRNA-cytidine(32) 2-sulfurtransferase.